The primary structure comprises 623 residues: Arginine--tRNA ligase (623 aa).

A 'HIGH' region motif is present at residues 116 to 126; that stretch reads ANPIHPLHVGH.

It belongs to the class-I aminoacyl-tRNA synthetase family.

The protein localises to the cytoplasm. It carries out the reaction tRNA(Arg) + L-arginine + ATP = L-arginyl-tRNA(Arg) + AMP + diphosphate. The sequence is that of Arginine--tRNA ligase from Sulfurisphaera tokodaii (strain DSM 16993 / JCM 10545 / NBRC 100140 / 7) (Sulfolobus tokodaii).